We begin with the raw amino-acid sequence, 504 residues long: ATP synthase subunit alpha, chloroplastic (504 aa).

170–177 (GDRQTGKT) is an ATP binding site.

The protein belongs to the ATPase alpha/beta chains family. F-type ATPases have 2 components, CF(1) - the catalytic core - and CF(0) - the membrane proton channel. CF(1) has five subunits: alpha(3), beta(3), gamma(1), delta(1), epsilon(1). CF(0) has four main subunits: a, b, b' and c.

Its subcellular location is the plastid. The protein localises to the chloroplast thylakoid membrane. The catalysed reaction is ATP + H2O + 4 H(+)(in) = ADP + phosphate + 5 H(+)(out). Its function is as follows. Produces ATP from ADP in the presence of a proton gradient across the membrane. The alpha chain is a regulatory subunit. The sequence is that of ATP synthase subunit alpha, chloroplastic from Hordeum vulgare (Barley).